The primary structure comprises 547 residues: MAAKEVLFGNDARVKMLAGVNVLANAVKVTLGPKGRNVVLDKSFGAPLITKDGVSVAKEIELEDKFENMGAQMVKEVASKANDAAGDGTTTATVLAQAIVTEGLKAVAAGMNPMDLKRGIDKAVIAAVAELKNLSQECSDTKAIAQVGTISANSDESIGEIIATAMERVGKEGVITVEEGQALENELDVVEGMQFDRGYLSPYFINKPETGSVELESPFILLVDKKVSNIRELLPILEGLAKTGKPLLIVAEDVEGEALATLVVNNMRGIVKVAAVKAPGFGDRRKAMLQDIAILTGGTVIAEEIGLELEKATLEDLGTAKRVIITKDDTTIIDGNGEETQIKARVAQIKIQAEESTSDYDKEKLQERMAKLAGGVAVIKVGAATEVEMKEKKARVEDALHATRAAVEEGVVAGGGVALVRVASKIGEVEVLNEDQKHGVIIALRAMEAPLRQIATNAGEEGSVVANNVKNGTGNYGYNAGNDTYGDMLEMGILDPTKVTRSALQFASSIAGLMITTECMVADVKEDAADMGGMGGMGGMGGMGGMM.

ATP-binding positions include 30-33 (TLGP), K51, 87-91 (DGTTT), G415, and D495.

This sequence belongs to the chaperonin (HSP60) family. In terms of assembly, forms a cylinder of 14 subunits composed of two heptameric rings stacked back-to-back. Interacts with the co-chaperonin GroES.

The protein resides in the cytoplasm. The catalysed reaction is ATP + H2O + a folded polypeptide = ADP + phosphate + an unfolded polypeptide.. Its function is as follows. Together with its co-chaperonin GroES, plays an essential role in assisting protein folding. The GroEL-GroES system forms a nano-cage that allows encapsulation of the non-native substrate proteins and provides a physical environment optimized to promote and accelerate protein folding. The polypeptide is Chaperonin GroEL (Shewanella halifaxensis (strain HAW-EB4)).